The chain runs to 403 residues: Phosphoglycerate kinase (403 aa).

Substrate is bound by residues 21–23 (DFN), Arg36, 59–62 (HLGR), Arg119, and Arg159. Residues Lys214, Gly301, Glu332, and 359 to 362 (GGDS) each bind ATP.

This sequence belongs to the phosphoglycerate kinase family. In terms of assembly, monomer.

Its subcellular location is the cytoplasm. The enzyme catalyses (2R)-3-phosphoglycerate + ATP = (2R)-3-phospho-glyceroyl phosphate + ADP. Its pathway is carbohydrate degradation; glycolysis; pyruvate from D-glyceraldehyde 3-phosphate: step 2/5. The protein is Phosphoglycerate kinase of Lactobacillus helveticus (strain DPC 4571).